Reading from the N-terminus, the 24-residue chain is Calcium-binding shell glycoprotein P50 (24 aa).

The tract at residues 1–24 is disordered; the sequence is KDALEHTGFAPKKDGEEHVEWNYN.

Glycosylated. As to expression, nacreous and prismatic layers of the shell.

Calcium-binding. This is Calcium-binding shell glycoprotein P50 from Unio pictorum (Painter's mussel).